The chain runs to 121 residues: Large ribosomal subunit protein uL18 (121 aa).

Belongs to the universal ribosomal protein uL18 family. In terms of assembly, part of the 50S ribosomal subunit; part of the 5S rRNA/L5/L18/L25 subcomplex. Contacts the 5S and 23S rRNAs.

This is one of the proteins that bind and probably mediate the attachment of the 5S RNA into the large ribosomal subunit, where it forms part of the central protuberance. The protein is Large ribosomal subunit protein uL18 of Delftia acidovorans (strain DSM 14801 / SPH-1).